A 615-amino-acid chain; its full sequence is Gluconate 2-dehydrogenase flavoprotein (615 aa).

The signal sequence occupies residues 1–22 (MERGERVSVPVSGYSRGEGVTV). Catalysis depends on His542, which acts as the Proton acceptor.

This sequence belongs to the GMC oxidoreductase family. In terms of assembly, heterotrimer. Requires FAD as cofactor.

The protein resides in the cell membrane. The catalysed reaction is D-gluconate + A = 2-dehydro-D-gluconate + AH2. Functionally, part of the heterotrimer that catalyzes the conversion of D-gluconate to 2-dehydro-D-gluconate. This subunit functions as the dehydrogenase. The sequence is that of Gluconate 2-dehydrogenase flavoprotein from Pantoea cypripedii (Pectobacterium cypripedii).